Reading from the N-terminus, the 144-residue chain is Eukaryotic translation initiation factor 1A, Y-chromosomal (144 aa).

Positions 1–15 (MPKNKGKGGKNRRRG) are enriched in basic residues. The interval 1 to 26 (MPKNKGKGGKNRRRGKNENESEKREL) is disordered. A compositionally biased stretch (basic and acidic residues) spans 16-26 (KNENESEKREL). Residues 22–96 (EKRELVFKED…NKADVILKYN (75 aa)) form the S1-like domain. Lys88 participates in a covalent cross-link: Glycyl lysine isopeptide (Lys-Gly) (interchain with G-Cter in ubiquitin). Residues 114 to 144 (KINETDTFGPGDDDEIQFDDIGDDDEDIDDI) form a disordered region. A compositionally biased stretch (acidic residues) spans 124–144 (GDDDEIQFDDIGDDDEDIDDI).

This sequence belongs to the eIF-1A family. In terms of assembly, component of the 43S pre-initiation complex (43S PIC), which is composed of the 40S ribosomal subunit, EIF1, eIF1A (EIF1AX), eIF3 complex, EIF5 and eIF2-GTP-initiator tRNA complex (eIF2 ternary complex). Interacts with EIF5; this interaction contributes to the maintenance of EIF1 within the open 43S PIC. Interacts through its C-terminal domain (CTD) with the CTD of EIF5B; from the location of the start codon by the 43S complex until the formation of the 80S complex. In terms of tissue distribution, ubiquitous.

It localises to the cytoplasm. Functionally, component of the 43S pre-initiation complex (43S PIC), which binds to the mRNA cap-proximal region, scans mRNA 5'-untranslated region, and locates the initiation codon. This protein enhances formation of the cap-proximal complex. Together with EIF1, facilitates scanning, start codon recognition, promotion of the assembly of 48S complex at the initiation codon (43S PIC becomes 48S PIC after the start codon is reached), and dissociation of aberrant complexes. After start codon location, together with EIF5B orients the initiator methionine-tRNA in a conformation that allows 60S ribosomal subunit joining to form the 80S initiation complex. Is released after 80S initiation complex formation, just after GTP hydrolysis by EIF5B, and before release of EIF5B. Its globular part is located in the A site of the 40S ribosomal subunit. Its interaction with EIF5 during scanning contribute to the maintenance of EIF1 within the open 43S PIC. In contrast to yeast orthologs, does not bind EIF1. This Homo sapiens (Human) protein is Eukaryotic translation initiation factor 1A, Y-chromosomal (EIF1AY).